Reading from the N-terminus, the 332-residue chain is Adenosine deaminase (332 aa).

The Zn(2+) site is built by histidine 12 and histidine 14. Substrate is bound by residues histidine 14, aspartate 16, and glycine 169. Position 196 (histidine 196) interacts with Zn(2+). The active-site Proton donor is the glutamate 199. Aspartate 277 lines the Zn(2+) pocket.

The protein belongs to the metallo-dependent hydrolases superfamily. Adenosine and AMP deaminases family. Adenosine deaminase subfamily. It depends on Zn(2+) as a cofactor.

The catalysed reaction is adenosine + H2O + H(+) = inosine + NH4(+). It carries out the reaction 2'-deoxyadenosine + H2O + H(+) = 2'-deoxyinosine + NH4(+). Its function is as follows. Catalyzes the hydrolytic deamination of adenosine and 2-deoxyadenosine. The chain is Adenosine deaminase from Vibrio atlanticus (strain LGP32) (Vibrio splendidus (strain Mel32)).